The following is a 290-amino-acid chain: ATP synthase gamma chain (290 aa).

It belongs to the ATPase gamma chain family. As to quaternary structure, F-type ATPases have 2 components, CF(1) - the catalytic core - and CF(0) - the membrane proton channel. CF(1) has five subunits: alpha(3), beta(3), gamma(1), delta(1), epsilon(1). CF(0) has three main subunits: a, b and c.

It localises to the cell membrane. Its function is as follows. Produces ATP from ADP in the presence of a proton gradient across the membrane. The gamma chain is believed to be important in regulating ATPase activity and the flow of protons through the CF(0) complex. This chain is ATP synthase gamma chain, found in Wolbachia sp. subsp. Brugia malayi (strain TRS).